Here is a 120-residue protein sequence, read N- to C-terminus: Aspartate 1-decarboxylase (120 aa).

The active-site Schiff-base intermediate with substrate; via pyruvic acid is the serine 25. Pyruvic acid (Ser) is present on serine 25. Threonine 57 is a binding site for substrate. Residue tyrosine 58 is the Proton donor of the active site. Substrate is bound at residue 72 to 74 (GAA).

It belongs to the PanD family. As to quaternary structure, heterooctamer of four alpha and four beta subunits. Pyruvate is required as a cofactor. Is synthesized initially as an inactive proenzyme, which is activated by self-cleavage at a specific serine bond to produce a beta-subunit with a hydroxyl group at its C-terminus and an alpha-subunit with a pyruvoyl group at its N-terminus.

The protein resides in the cytoplasm. It catalyses the reaction L-aspartate + H(+) = beta-alanine + CO2. It participates in cofactor biosynthesis; (R)-pantothenate biosynthesis; beta-alanine from L-aspartate: step 1/1. Functionally, catalyzes the pyruvoyl-dependent decarboxylation of aspartate to produce beta-alanine. The sequence is that of Aspartate 1-decarboxylase from Helicobacter hepaticus (strain ATCC 51449 / 3B1).